A 484-amino-acid polypeptide reads, in one-letter code: MKKRKELNALIGLAGDHRRKKTKQGSGSHRLLRTEPPDSDSESSTDEEEFGAIGNRSRFVKGDYARCCKICCPLCAFVILAACVVASVGLVWMQMALKEDLDVLKEKFRTMESNQKSSFQEIPKLNEELLSKQKQLEKIESGELGLSRVWINITEMNKQISLLSSAVNHLKASVKSAADLLSLPSTVEGLQKSVASIGNTLNSVHLAVEVIQKTVDEHRTTLGLLQGSMENNGSNQILPSPSPPSELDNKSHSESAKQDILYLHNSLEEVNSTVVEYQRQNDLKLKGMSETLSNLTQRLSLIESHVVALSKAEQRTNVSSSTMENRAATLKRESLVTNRSDTVQAQSMKKEDNSNSQVSELREKLQLISALTNKPESNRPPETTDEEQVQNFTSDPSALPEFSQLLRNQIETQVKPLSLPGISSIKDLQDLFHKTGQDVDGMLTYQELWNSLGSAMPRPESLRAFDSNGDGRYSFLELRLALGI.

Disordered stretches follow at residues 1-48, 227-255, and 313-395; these read MKKR…TDEE, GSME…HSES, and EQRT…FTSD. Residues 37 to 48 show a composition bias toward acidic residues; it reads PDSDSESSTDEE. 3 stretches are compositionally biased toward polar residues: residues 228–239, 315–324, and 335–347; these read SMENNGSNQILP, RTNVSSSTME, and LVTN…QAQS. EF-hand domains follow at residues 423–452 and 453–484; these read SSIK…WNSL and GSAM…ALGI. Residues Asp466, Asn468, Asp470, Arg472, and Glu477 each contribute to the Ca(2+) site.

This is EF-hand calcium-binding domain-containing protein 14 (Efcab14) from Mus musculus (Mouse).